The chain runs to 148 residues: MKLILTQEVPGLGSPGDIVEVANGYGRNYLVPRRYAILATKGAERQVEQIKRARSARAVRDLGHAQEIAGQLGGLKVELTSRAGKEGRLFGSVTAADVVEAVTAAGGPELDRRRVELTTPIKSLGAYTVAVHLHPEVTATVKLQVTQA.

It belongs to the bacterial ribosomal protein bL9 family.

Its function is as follows. Binds to the 23S rRNA. In Frankia casuarinae (strain DSM 45818 / CECT 9043 / HFP020203 / CcI3), this protein is Large ribosomal subunit protein bL9.